The sequence spans 228 residues: Apoptosis regulator R1 (228 aa).

Over residues 1 to 21 the composition is skewed to basic and acidic residues; sequence LNPKKKENNGVKNGDREKQHE. Positions 1–29 are disordered; it reads LNPKKKENNGVKNGDREKQHETGNTIFRG. The BH1 motif lies at 120–139; that stretch reads SLFQGGVNWGRIVAFFVFGA. The BH2 motif lies at 171–186; the sequence is DWIQSNGGWNGFLTLY. A helical transmembrane segment spans residues 207–227; sequence TVLTGAVALGALMTVGALFAS.

Belongs to the Bcl-2 family.

Its subcellular location is the membrane. In terms of biological role, could be the homolog of mammalian Bcl-W. This Xenopus laevis (African clawed frog) protein is Apoptosis regulator R1.